A 733-amino-acid chain; its full sequence is 2'-5'-oligoadenylate synthase 2 (733 aa).

Glycine 2 carries the N-myristoyl glycine lipid modification. OAS domain regions lie at residues 47–365 (VPSQ…CWDV) and 373–713 (TPSH…WKVP). Lysine 408 carries the N6-acetyllysine modification. Serine 427 is an ATP binding site. Aspartate 439, aspartate 441, and aspartate 510 together coordinate Mg(2+). Positions 574 and 577 each coordinate ATP.

The protein belongs to the 2-5A synthase family. Homodimer. The cofactor is Mg(2+). In terms of processing, myristoylation is not essential for its activity. Glycosylated. Glycosylation is essential for its activity.

The protein resides in the cytoplasm. It localises to the perinuclear region. The catalysed reaction is 3 ATP = 5'-triphosphoadenylyl-(2'-&gt;5')-adenylyl-(2'-&gt;5')-adenosine + 2 diphosphate. Produced as a latent enzyme which is activated by double stranded RNA (dsRNA) generated during the course of viral infection. The dsRNA activator must be at least 15 nucleotides long, and no modification of the 2'-hydroxyl group is tolerated. ssRNA or dsDNA do not act as activators. Strongly inhibited by copper, iron and zinc ions. Partially inhibited by cobalt and nickel ions. Its function is as follows. Interferon-induced, dsRNA-activated antiviral enzyme which plays a critical role in cellular innate antiviral response. Activated by detection of double stranded RNA (dsRNA): polymerizes higher oligomers of 2'-5'-oligoadenylates (2-5A) from ATP which then bind to the inactive monomeric form of ribonuclease L (RNASEL) leading to its dimerization and subsequent activation. Activation of RNASEL leads to degradation of cellular as well as viral RNA, resulting in the inhibition of protein synthesis, thus terminating viral replication. Can mediate the antiviral effect via the classical RNASEL-dependent pathway or an alternative antiviral pathway independent of RNASEL. In addition, it may also play a role in other cellular processes such as apoptosis, cell growth, differentiation and gene regulation. May act as a negative regulator of lactation, stopping lactation in virally infected mammary gland lobules, thereby preventing transmission of viruses to neonates. Non-infected lobules would not be affected, allowing efficient pup feeding during infection. This Rattus norvegicus (Rat) protein is 2'-5'-oligoadenylate synthase 2 (Oas2).